A 465-amino-acid polypeptide reads, in one-letter code: Uronate isomerase (465 aa).

This sequence belongs to the metallo-dependent hydrolases superfamily. Uronate isomerase family.

It carries out the reaction D-glucuronate = D-fructuronate. The enzyme catalyses aldehydo-D-galacturonate = keto-D-tagaturonate. It participates in carbohydrate metabolism; pentose and glucuronate interconversion. This chain is Uronate isomerase, found in Streptococcus equi subsp. zooepidemicus (strain MGCS10565).